The following is a 303-amino-acid chain: uncharacterized protein (303 aa).

The 60-residue stretch at 15–74 folds into the S4 RNA-binding domain; it reads ERIDKFLASTENDWSRTQVQQWVKDGQVVVNGSAVKANYKIQPGDQVTVTVPEPEALDVL. Asp-138 is an active-site residue.

It belongs to the pseudouridine synthase RluA family.

The enzyme catalyses a uridine in RNA = a pseudouridine in RNA. This is an uncharacterized protein from Bacillus subtilis (strain 168).